The sequence spans 209 residues: Pyridoxal 5'-phosphate synthase subunit PdxT (209 aa).

Gly-58–Ser-60 contributes to the L-glutamine binding site. The active-site Nucleophile is Cys-90. L-glutamine-binding positions include Arg-119 and Ile-148–Arg-149. Active-site charge relay system residues include His-185 and Glu-187.

Belongs to the glutaminase PdxT/SNO family. In the presence of PdxS, forms a dodecamer of heterodimers. Only shows activity in the heterodimer.

It carries out the reaction aldehydo-D-ribose 5-phosphate + D-glyceraldehyde 3-phosphate + L-glutamine = pyridoxal 5'-phosphate + L-glutamate + phosphate + 3 H2O + H(+). It catalyses the reaction L-glutamine + H2O = L-glutamate + NH4(+). It functions in the pathway cofactor biosynthesis; pyridoxal 5'-phosphate biosynthesis. Catalyzes the hydrolysis of glutamine to glutamate and ammonia as part of the biosynthesis of pyridoxal 5'-phosphate. The resulting ammonia molecule is channeled to the active site of PdxS. The sequence is that of Pyridoxal 5'-phosphate synthase subunit PdxT from Clavibacter michiganensis subsp. michiganensis (strain NCPPB 382).